A 228-amino-acid chain; its full sequence is Cytochrome c oxidase subunit 2 (228 aa).

Residues 1-26 (MATWANLGLQNSSSPLMEQLNFFHDH) lie on the Mitochondrial intermembrane side of the membrane. Residues 27–48 (TVLILIMITVMITYVMGMLFFN) form a helical membrane-spanning segment. Residues 49–62 (KFTNRYLLHGQTIE) are Mitochondrial matrix-facing. The helical transmembrane segment at 63–82 (IIWTILPAIILMFIAFPSLR) threads the bilayer. The Mitochondrial intermembrane segment spans residues 83–228 (LLYLLDEINS…FIKWVSSQLN (146 aa)). The Cu cation site is built by His161, Cys196, Glu198, Cys200, His204, and Met207. Residue Glu198 coordinates Mg(2+).

Belongs to the cytochrome c oxidase subunit 2 family. In terms of assembly, component of the cytochrome c oxidase (complex IV, CIV), a multisubunit enzyme composed of a catalytic core of 3 subunits and several supernumerary subunits. The complex exists as a monomer or a dimer and forms supercomplexes (SCs) in the inner mitochondrial membrane with ubiquinol-cytochrome c oxidoreductase (cytochrome b-c1 complex, complex III, CIII). It depends on Cu cation as a cofactor.

The protein resides in the mitochondrion inner membrane. It carries out the reaction 4 Fe(II)-[cytochrome c] + O2 + 8 H(+)(in) = 4 Fe(III)-[cytochrome c] + 2 H2O + 4 H(+)(out). Component of the cytochrome c oxidase, the last enzyme in the mitochondrial electron transport chain which drives oxidative phosphorylation. The respiratory chain contains 3 multisubunit complexes succinate dehydrogenase (complex II, CII), ubiquinol-cytochrome c oxidoreductase (cytochrome b-c1 complex, complex III, CIII) and cytochrome c oxidase (complex IV, CIV), that cooperate to transfer electrons derived from NADH and succinate to molecular oxygen, creating an electrochemical gradient over the inner membrane that drives transmembrane transport and the ATP synthase. Cytochrome c oxidase is the component of the respiratory chain that catalyzes the reduction of oxygen to water. Electrons originating from reduced cytochrome c in the intermembrane space (IMS) are transferred via the dinuclear copper A center (CU(A)) of subunit 2 and heme A of subunit 1 to the active site in subunit 1, a binuclear center (BNC) formed by heme A3 and copper B (CU(B)). The BNC reduces molecular oxygen to 2 water molecules using 4 electrons from cytochrome c in the IMS and 4 protons from the mitochondrial matrix. The chain is Cytochrome c oxidase subunit 2 (COII) from Culex quinquefasciatus (Southern house mosquito).